The primary structure comprises 970 residues: Glycine dehydrogenase (decarboxylating) (970 aa).

K723 is subject to N6-(pyridoxal phosphate)lysine.

It belongs to the GcvP family. The glycine cleavage system is composed of four proteins: P, T, L and H. Pyridoxal 5'-phosphate serves as cofactor.

It carries out the reaction N(6)-[(R)-lipoyl]-L-lysyl-[glycine-cleavage complex H protein] + glycine + H(+) = N(6)-[(R)-S(8)-aminomethyldihydrolipoyl]-L-lysyl-[glycine-cleavage complex H protein] + CO2. In terms of biological role, the glycine cleavage system catalyzes the degradation of glycine. The P protein binds the alpha-amino group of glycine through its pyridoxal phosphate cofactor; CO(2) is released and the remaining methylamine moiety is then transferred to the lipoamide cofactor of the H protein. The polypeptide is Glycine dehydrogenase (decarboxylating) (Burkholderia pseudomallei (strain 1106a)).